A 258-amino-acid polypeptide reads, in one-letter code: Phosphoprotein ECPP44 (258 aa).

Disordered stretches follow at residues 1-25, 46-131, and 148-175; these read MASD…DRGL, EKVQ…PVEV, and KLPG…VDCA. Composition is skewed to basic and acidic residues over residues 11 to 25, 46 to 80, 109 to 124, and 148 to 158; these read SVEK…DRGL, EKVQ…EKLH, GLKE…KEED, and KLPGGGKKVEE.

Belongs to the plant dehydrin family. In terms of processing, phosphorylated in embryogenic and somatic embryos. Not phosphorylated in non-embryogenic cells.

Phosphorylation of ECCP44 protein is thought to be involved in the acquisition of embryogenic competence. Unlike other dehydrins, it is not thought to function as an environmental stress tolerant. The chain is Phosphoprotein ECPP44 (ECPP44) from Daucus carota (Wild carrot).